The following is a 497-amino-acid chain: Protein nucleotidyltransferase YdiU (497 aa).

8 residues coordinate ATP: Gly-92, Gly-94, Arg-95, Lys-114, Asp-126, Gly-127, Arg-177, and Arg-184. The active-site Proton acceptor is Asp-261. The Mg(2+) site is built by Asn-262 and Asp-271. Asp-271 lines the ATP pocket.

The protein belongs to the SELO family. Mg(2+) is required as a cofactor. The cofactor is Mn(2+).

It catalyses the reaction L-seryl-[protein] + ATP = 3-O-(5'-adenylyl)-L-seryl-[protein] + diphosphate. It carries out the reaction L-threonyl-[protein] + ATP = 3-O-(5'-adenylyl)-L-threonyl-[protein] + diphosphate. The enzyme catalyses L-tyrosyl-[protein] + ATP = O-(5'-adenylyl)-L-tyrosyl-[protein] + diphosphate. The catalysed reaction is L-histidyl-[protein] + UTP = N(tele)-(5'-uridylyl)-L-histidyl-[protein] + diphosphate. It catalyses the reaction L-seryl-[protein] + UTP = O-(5'-uridylyl)-L-seryl-[protein] + diphosphate. It carries out the reaction L-tyrosyl-[protein] + UTP = O-(5'-uridylyl)-L-tyrosyl-[protein] + diphosphate. Nucleotidyltransferase involved in the post-translational modification of proteins. It can catalyze the addition of adenosine monophosphate (AMP) or uridine monophosphate (UMP) to a protein, resulting in modifications known as AMPylation and UMPylation. In Bordetella petrii (strain ATCC BAA-461 / DSM 12804 / CCUG 43448), this protein is Protein nucleotidyltransferase YdiU.